The following is a 377-amino-acid chain: Chaperone protein DnaJ (377 aa).

The J domain occupies 5-70 (DYYEVLGVSR…DKKAAYDQFG (66 aa)). The CR-type zinc-finger motif lies at 133-211 (GLTKELRIPT…CHGDGRVEKS (79 aa)). Residues cysteine 146, cysteine 149, cysteine 163, cysteine 166, cysteine 185, cysteine 188, cysteine 199, and cysteine 202 each contribute to the Zn(2+) site. CXXCXGXG motif repeat units lie at residues 146–153 (CDLCEGSG), 163–170 (CGTCHGQG), 185–192 (CPTCHGRG), and 199–206 (CSKCHGDG).

It belongs to the DnaJ family. Homodimer. Requires Zn(2+) as cofactor.

It is found in the cytoplasm. Participates actively in the response to hyperosmotic and heat shock by preventing the aggregation of stress-denatured proteins and by disaggregating proteins, also in an autonomous, DnaK-independent fashion. Unfolded proteins bind initially to DnaJ; upon interaction with the DnaJ-bound protein, DnaK hydrolyzes its bound ATP, resulting in the formation of a stable complex. GrpE releases ADP from DnaK; ATP binding to DnaK triggers the release of the substrate protein, thus completing the reaction cycle. Several rounds of ATP-dependent interactions between DnaJ, DnaK and GrpE are required for fully efficient folding. Also involved, together with DnaK and GrpE, in the DNA replication of plasmids through activation of initiation proteins. The chain is Chaperone protein DnaJ from Shewanella baltica (strain OS195).